The chain runs to 163 residues: Large ribosomal subunit protein bL17 (163 aa).

Residues 127-163 (VAKKATRTRRSKKSAEAAAPAAVEAPATEEPKAESAE) are disordered. A compositionally biased stretch (basic residues) spans 129–138 (KKATRTRRSK). Over residues 142–154 (EAAAPAAVEAPAT) the composition is skewed to low complexity.

Belongs to the bacterial ribosomal protein bL17 family. In terms of assembly, part of the 50S ribosomal subunit. Contacts protein L32.

This Bacteroides thetaiotaomicron (strain ATCC 29148 / DSM 2079 / JCM 5827 / CCUG 10774 / NCTC 10582 / VPI-5482 / E50) protein is Large ribosomal subunit protein bL17.